A 734-amino-acid chain; its full sequence is 1,4-alpha-glucan branching enzyme GlgB (734 aa).

The active-site Nucleophile is D417. Catalysis depends on E470, which acts as the Proton donor.

It belongs to the glycosyl hydrolase 13 family. GlgB subfamily. In terms of assembly, monomer.

It carries out the reaction Transfers a segment of a (1-&gt;4)-alpha-D-glucan chain to a primary hydroxy group in a similar glucan chain.. It functions in the pathway glycan biosynthesis; glycogen biosynthesis. Its function is as follows. Catalyzes the formation of the alpha-1,6-glucosidic linkages in glycogen by scission of a 1,4-alpha-linked oligosaccharide from growing alpha-1,4-glucan chains and the subsequent attachment of the oligosaccharide to the alpha-1,6 position. This is 1,4-alpha-glucan branching enzyme GlgB (glgB) from Rhizobium radiobacter (Agrobacterium tumefaciens).